Consider the following 351-residue polypeptide: Selenide, water dikinase (351 aa).

The active site involves cysteine 20. ATP contacts are provided by residues lysine 23 and 51–53 (TKD). Aspartate 54 contributes to the Mg(2+) binding site. ATP contacts are provided by residues aspartate 71, aspartate 94, and 142-144 (GHS). Position 94 (aspartate 94) interacts with Mg(2+). Aspartate 230 lines the Mg(2+) pocket.

The protein belongs to the selenophosphate synthase 1 family. Class I subfamily. Homodimer. Mg(2+) serves as cofactor.

The enzyme catalyses hydrogenselenide + ATP + H2O = selenophosphate + AMP + phosphate + 2 H(+). Synthesizes selenophosphate from selenide and ATP. This chain is Selenide, water dikinase, found in Pasteurella multocida (strain Pm70).